A 234-amino-acid polypeptide reads, in one-letter code: Large ribosomal subunit protein uL1 (234 aa).

It belongs to the universal ribosomal protein uL1 family. Part of the 50S ribosomal subunit.

Functionally, binds directly to 23S rRNA. The L1 stalk is quite mobile in the ribosome, and is involved in E site tRNA release. Protein L1 is also a translational repressor protein, it controls the translation of the L11 operon by binding to its mRNA. The polypeptide is Large ribosomal subunit protein uL1 (Aliivibrio salmonicida (strain LFI1238) (Vibrio salmonicida (strain LFI1238))).